The primary structure comprises 451 residues: tRNA-2-methylthio-N(6)-dimethylallyladenosine synthase (451 aa).

Positions 6 to 122 constitute an MTTase N-terminal domain; the sequence is RHYHITTFGC…LQDLLEQVFN (117 aa). Cysteine 15, cysteine 51, cysteine 85, cysteine 157, cysteine 161, and cysteine 164 together coordinate [4Fe-4S] cluster. Residues 143-380 form the Radical SAM core domain; it reads RDSKITAWVN…NHLVGVKAAD (238 aa). Residues 383-447 form the TRAM domain; sequence QRYMGRIEEV…PFSLTGEVKE (65 aa).

It belongs to the methylthiotransferase family. MiaB subfamily. In terms of assembly, monomer. [4Fe-4S] cluster is required as a cofactor.

The protein resides in the cytoplasm. The enzyme catalyses N(6)-dimethylallyladenosine(37) in tRNA + (sulfur carrier)-SH + AH2 + 2 S-adenosyl-L-methionine = 2-methylsulfanyl-N(6)-dimethylallyladenosine(37) in tRNA + (sulfur carrier)-H + 5'-deoxyadenosine + L-methionine + A + S-adenosyl-L-homocysteine + 2 H(+). Its function is as follows. Catalyzes the methylthiolation of N6-(dimethylallyl)adenosine (i(6)A), leading to the formation of 2-methylthio-N6-(dimethylallyl)adenosine (ms(2)i(6)A) at position 37 in tRNAs that read codons beginning with uridine. In Trichodesmium erythraeum (strain IMS101), this protein is tRNA-2-methylthio-N(6)-dimethylallyladenosine synthase.